Here is a 216-residue protein sequence, read N- to C-terminus: Large ribosomal subunit protein uL3 (216 aa).

The disordered stretch occupies residues glycine 119–arginine 143.

The protein belongs to the universal ribosomal protein uL3 family. As to quaternary structure, part of the 50S ribosomal subunit. Forms a cluster with proteins L14 and L19.

Functionally, one of the primary rRNA binding proteins, it binds directly near the 3'-end of the 23S rRNA, where it nucleates assembly of the 50S subunit. This Levilactobacillus brevis (strain ATCC 367 / BCRC 12310 / CIP 105137 / JCM 1170 / LMG 11437 / NCIMB 947 / NCTC 947) (Lactobacillus brevis) protein is Large ribosomal subunit protein uL3.